The chain runs to 188 residues: Ribosome maturation factor RimP (188 aa).

It belongs to the RimP family.

The protein resides in the cytoplasm. Required for maturation of 30S ribosomal subunits. The chain is Ribosome maturation factor RimP from Corynebacterium aurimucosum (strain ATCC 700975 / DSM 44827 / CIP 107346 / CN-1) (Corynebacterium nigricans).